Consider the following 203-residue polypeptide: Small ribosomal subunit protein uS4 (203 aa).

In terms of domain architecture, S4 RNA-binding spans Arg93–Val156.

This sequence belongs to the universal ribosomal protein uS4 family. In terms of assembly, part of the 30S ribosomal subunit. Contacts protein S5. The interaction surface between S4 and S5 is involved in control of translational fidelity.

One of the primary rRNA binding proteins, it binds directly to 16S rRNA where it nucleates assembly of the body of the 30S subunit. Functionally, with S5 and S12 plays an important role in translational accuracy. This is Small ribosomal subunit protein uS4 from Streptococcus pyogenes serotype M1.